The sequence spans 762 residues: cGMP-dependent protein kinase 2 (762 aa).

The segment at 1–25 (MGNGSVKPKHSKHPDGHSGNLTTDA) is disordered. Residue glycine 2 is the site of N-myristoyl glycine attachment. Residues 23–85 (TDALRNKVTE…CIQLNKLQDV (63 aa)) are a coiled coil. Serine 110 and serine 117 each carry phosphoserine. Positions 117 to 138 (SRRGAKAGVSAEPTTRTYDLNK) are disordered. The segment at 168–283 (FLKRLDPQQI…DEQYRNFLRS (116 aa)) is cGMP-binding, high affinity; cAMP-binding, moderate affinity. 3',5'-cyclic AMP is bound by residues 232 to 235 (GELA) and 242 to 243 (RT). Residues 232 to 235 (GELA), 242 to 243 (RT), lysine 347, 356 to 359 (GEKA), 366 to 367 (RS), aspartate 412, and arginine 415 contribute to the 3',5'-cyclic GMP site. The interval 286-416 (LLKNLPEDKL…NLNRDDEKRH (131 aa)) is cGMP-binding, high affinity; cAMP-binding, low affinity. Position 431 is a phosphoserine (serine 431). Residues 453–711 (LEIIATLGVG…INDIKKHRWL (259 aa)) form the Protein kinase domain. ATP-binding positions include 459–467 (LGVGGFGRV) and lysine 482. Aspartate 576 serves as the catalytic Proton acceptor. Phosphothreonine is present on threonine 609. The AGC-kinase C-terminal domain maps to 712-762 (NGFNWEGLKARSLPSPLQRELKGPIDHSYFDKYPPEKGMPPDELSGWDKDF). Residues 740–762 (YFDKYPPEKGMPPDELSGWDKDF) form a disordered region.

This sequence belongs to the protein kinase superfamily. AGC Ser/Thr protein kinase family. cGMP subfamily. As to quaternary structure, interacts with GRIA1/GLUR1. Myristoylation mediates membrane localization. As to expression, highly concentrated in brain, lung and intestinal mucosa.

The protein resides in the apical cell membrane. The catalysed reaction is L-seryl-[protein] + ATP = O-phospho-L-seryl-[protein] + ADP + H(+). The enzyme catalyses L-threonyl-[protein] + ATP = O-phospho-L-threonyl-[protein] + ADP + H(+). Its activity is regulated as follows. Binding of cGMP results in enzyme activation. Functionally, crucial regulator of intestinal secretion and bone growth. Phosphorylates and activates CFTR on the plasma membrane. Plays a key role in intestinal secretion by regulating cGMP-dependent translocation of CFTR in jejunum. Acts downstream of NMDAR to activate the plasma membrane accumulation of GRIA1/GLUR1 in synapse and increase synaptic plasticity. Phosphorylates GRIA1/GLUR1 at Ser-863. Acts as a regulator of gene expression and activator of the extracellular signal-regulated kinases MAPK3/ERK1 and MAPK1/ERK2 in mechanically stimulated osteoblasts. Under fluid shear stress, mediates ERK activation and subsequent induction of FOS, FOSL1/FRA1, FOSL2/FRA2 and FOSB that play a key role in the osteoblast anabolic response to mechanical stimulation. The sequence is that of cGMP-dependent protein kinase 2 (PRKG2) from Homo sapiens (Human).